Reading from the N-terminus, the 243-residue chain is tRNA (guanine-N(1)-)-methyltransferase (243 aa).

S-adenosyl-L-methionine is bound by residues G108 and 127 to 132 (LGDFVL).

The protein belongs to the RNA methyltransferase TrmD family. In terms of assembly, homodimer.

It is found in the cytoplasm. It carries out the reaction guanosine(37) in tRNA + S-adenosyl-L-methionine = N(1)-methylguanosine(37) in tRNA + S-adenosyl-L-homocysteine + H(+). In terms of biological role, specifically methylates guanosine-37 in various tRNAs. The chain is tRNA (guanine-N(1)-)-methyltransferase from Streptococcus pyogenes serotype M5 (strain Manfredo).